The following is a 177-amino-acid chain: ATP synthase subunit delta (177 aa).

Belongs to the ATPase delta chain family. As to quaternary structure, F-type ATPases have 2 components, F(1) - the catalytic core - and F(0) - the membrane proton channel. F(1) has five subunits: alpha(3), beta(3), gamma(1), delta(1), epsilon(1). F(0) has three main subunits: a(1), b(2) and c(10-14). The alpha and beta chains form an alternating ring which encloses part of the gamma chain. F(1) is attached to F(0) by a central stalk formed by the gamma and epsilon chains, while a peripheral stalk is formed by the delta and b chains.

It is found in the cell inner membrane. F(1)F(0) ATP synthase produces ATP from ADP in the presence of a proton or sodium gradient. F-type ATPases consist of two structural domains, F(1) containing the extramembraneous catalytic core and F(0) containing the membrane proton channel, linked together by a central stalk and a peripheral stalk. During catalysis, ATP synthesis in the catalytic domain of F(1) is coupled via a rotary mechanism of the central stalk subunits to proton translocation. Functionally, this protein is part of the stalk that links CF(0) to CF(1). It either transmits conformational changes from CF(0) to CF(1) or is implicated in proton conduction. The protein is ATP synthase subunit delta of Shewanella denitrificans (strain OS217 / ATCC BAA-1090 / DSM 15013).